Here is a 571-residue protein sequence, read N- to C-terminus: Dual specificity testis-specific protein kinase 2 (571 aa).

The Protein kinase domain maps to 58–313 (DFTCEKIGSG…EIGKTLEEIL (256 aa)). Residues 64–72 (IGSGFFSEV) and Lys87 each bind ATP. Asp176 acts as the Proton acceptor in catalysis. The residue at position 219 (Ser219) is a Phosphoserine; by autocatalysis. Phosphoserine is present on residues Ser369, Ser456, and Ser460. Residues 521 to 571 (ENGFGSRPQGTSPCPAGASEEMEVEERPAGSTPATFSTSGIGLQTQGKQDG) are disordered. Residues 552 to 571 (TPATFSTSGIGLQTQGKQDG) are compositionally biased toward polar residues.

The protein belongs to the protein kinase superfamily. TKL Ser/Thr protein kinase family. The cofactor is Mg(2+). Mn(2+) serves as cofactor. As to expression, predominantly expressed in testis and prostate. Found predominantly in non-germinal Sertoli cells.

Its subcellular location is the nucleus. It catalyses the reaction L-seryl-[protein] + ATP = O-phospho-L-seryl-[protein] + ADP + H(+). The enzyme catalyses L-threonyl-[protein] + ATP = O-phospho-L-threonyl-[protein] + ADP + H(+). It carries out the reaction L-tyrosyl-[protein] + ATP = O-phospho-L-tyrosyl-[protein] + ADP + H(+). With respect to regulation, activated by autophosphorylation on Ser-219. In terms of biological role, dual specificity protein kinase activity catalyzing autophosphorylation and phosphorylation of exogenous substrates on both serine/threonine and tyrosine residues. Phosphorylates cofilin at 'Ser-3'. May play an important role in spermatogenesis. In Homo sapiens (Human), this protein is Dual specificity testis-specific protein kinase 2 (TESK2).